The primary structure comprises 232 residues: MKRSKAYRAAAEKVNLDQLYSPEEALALVASGASAKFDETVDVAIRLGVDPKKADQMVRGTVNLPHGTGKTTRVLVFATGEKAEAAREAGADEVGDDDLIAKVQGGYLDFDSVVATPDMMGKVGRLGRVLGPRGLMPNPKTGTVTMDVAKAVSDIKGGKIEFRTDRYANLHFLIGKVSFGSEKLAENYFAALDEILRLKPNAAKGRYLRKITVSSTMGPGVQIDPVAARDAD.

It belongs to the universal ribosomal protein uL1 family. In terms of assembly, part of the 50S ribosomal subunit.

Binds directly to 23S rRNA. The L1 stalk is quite mobile in the ribosome, and is involved in E site tRNA release. Functionally, protein L1 is also a translational repressor protein, it controls the translation of the L11 operon by binding to its mRNA. The sequence is that of Large ribosomal subunit protein uL1 from Cutibacterium acnes (strain DSM 16379 / KPA171202) (Propionibacterium acnes).